The chain runs to 337 residues: D-alanine--D-alanine ligase (337 aa).

The ATP-grasp domain maps to 126 to 326; it reads KQIWISNGLS…YADLVLWLLS (201 aa). 152 to 207 contributes to the ATP binding site; sequence VKHLGLPLIVKPAHEGSSLGLTKVKSVEELPAAYQLAAGLDKKVIAETCIVGDELT. Aspartate 279, glutamate 293, and asparagine 295 together coordinate Mg(2+).

The protein belongs to the D-alanine--D-alanine ligase family. The cofactor is Mg(2+). Mn(2+) is required as a cofactor.

The protein resides in the cytoplasm. It catalyses the reaction 2 D-alanine + ATP = D-alanyl-D-alanine + ADP + phosphate + H(+). It participates in cell wall biogenesis; peptidoglycan biosynthesis. Its function is as follows. Cell wall formation. This is D-alanine--D-alanine ligase from Polynucleobacter asymbioticus (strain DSM 18221 / CIP 109841 / QLW-P1DMWA-1) (Polynucleobacter necessarius subsp. asymbioticus).